We begin with the raw amino-acid sequence, 318 residues long: Cytochrome f (318 aa).

An N-terminal signal peptide occupies residues 1-33 (MKNTFSWIKKEITRSISLSLMIYIITRTSISNA). Heme contacts are provided by Y34, C54, C57, and H58. The chain crosses the membrane as a helical span at residues 284 to 304 (VQGLLFFLASVILAQIFLVLK).

This sequence belongs to the cytochrome f family. As to quaternary structure, the 4 large subunits of the cytochrome b6-f complex are cytochrome b6, subunit IV (17 kDa polypeptide, petD), cytochrome f and the Rieske protein, while the 4 small subunits are PetG, PetL, PetM and PetN. The complex functions as a dimer. The cofactor is heme.

The protein localises to the plastid. Its subcellular location is the chloroplast thylakoid membrane. Functionally, component of the cytochrome b6-f complex, which mediates electron transfer between photosystem II (PSII) and photosystem I (PSI), cyclic electron flow around PSI, and state transitions. This Oenothera biennis (German evening primrose) protein is Cytochrome f.